Here is a 251-residue protein sequence, read N- to C-terminus: Pyrroloquinoline-quinone synthase (251 aa).

It belongs to the PqqC family.

It catalyses the reaction 6-(2-amino-2-carboxyethyl)-7,8-dioxo-1,2,3,4,7,8-hexahydroquinoline-2,4-dicarboxylate + 3 O2 = pyrroloquinoline quinone + 2 H2O2 + 2 H2O + H(+). It participates in cofactor biosynthesis; pyrroloquinoline quinone biosynthesis. Functionally, ring cyclization and eight-electron oxidation of 3a-(2-amino-2-carboxyethyl)-4,5-dioxo-4,5,6,7,8,9-hexahydroquinoline-7,9-dicarboxylic-acid to PQQ. The sequence is that of Pyrroloquinoline-quinone synthase from Pseudomonas putida (strain ATCC 47054 / DSM 6125 / CFBP 8728 / NCIMB 11950 / KT2440).